Here is a 144-residue protein sequence, read N- to C-terminus: MLVPKRVKHRKVQRGHMRGEAKGGKTVTFGEFGLQALDSHWISNRQIEAARIAMTRYMKRGGKVWIKIFPQLSYTSKGVGVRMGNGKGAPEGWVAPVKRGKVMFEVGGVSEEVAREALRLAGHKLPVRTKIVQREEVGGQSNEK.

Over residues 1 to 16 (MLVPKRVKHRKVQRGH) the composition is skewed to basic residues. Positions 1–20 (MLVPKRVKHRKVQRGHMRGE) are disordered.

Belongs to the universal ribosomal protein uL16 family. Part of the 50S ribosomal subunit.

Its function is as follows. Binds 23S rRNA and is also seen to make contacts with the A and possibly P site tRNAs. This is Large ribosomal subunit protein uL16 from Limosilactobacillus reuteri (strain DSM 20016) (Lactobacillus reuteri).